A 513-amino-acid polypeptide reads, in one-letter code: Cytochrome P450 94A2 (513 aa).

The helical transmembrane segment at 7–24 (ISWLLFSTSLFWFLFLAT) threads the bilayer. Cys455 is a binding site for heme.

The protein belongs to the cytochrome P450 family. Heme serves as cofactor. In terms of tissue distribution, weakly expressed in seedlings.

Its subcellular location is the endoplasmic reticulum membrane. Catalyzes the omega-hydroxylation of various fatty acids (FA). The substrate specificity is higher for myristate &gt; laurate = palmitate (C14&gt;C16=C12). The sequence is that of Cytochrome P450 94A2 (CYP94A2) from Vicia sativa (Spring vetch).